A 1372-amino-acid chain; its full sequence is DNA-directed RNA polymerase subunit beta (1372 aa).

Belongs to the RNA polymerase beta chain family. As to quaternary structure, the RNAP catalytic core consists of 2 alpha, 1 beta, 1 beta' and 1 omega subunit. When a sigma factor is associated with the core the holoenzyme is formed, which can initiate transcription.

It carries out the reaction RNA(n) + a ribonucleoside 5'-triphosphate = RNA(n+1) + diphosphate. Its function is as follows. DNA-dependent RNA polymerase catalyzes the transcription of DNA into RNA using the four ribonucleoside triphosphates as substrates. The chain is DNA-directed RNA polymerase subunit beta from Psychrobacter cryohalolentis (strain ATCC BAA-1226 / DSM 17306 / VKM B-2378 / K5).